A 342-amino-acid polypeptide reads, in one-letter code: Holliday junction branch migration complex subunit RuvB (342 aa).

The segment at methionine 1–tyrosine 184 is large ATPase domain (RuvB-L). ATP is bound by residues leucine 23, arginine 24, glycine 65, lysine 68, threonine 69, threonine 70, glutamate 131 to tyrosine 133, arginine 174, tyrosine 184, and arginine 221. A Mg(2+)-binding site is contributed by threonine 69. Residues aspartate 185–asparagine 255 are small ATPAse domain (RuvB-S). The interval lysine 258–aspartate 342 is head domain (RuvB-H). Residues arginine 313 and arginine 318 each coordinate DNA.

It belongs to the RuvB family. In terms of assembly, homohexamer. Forms an RuvA(8)-RuvB(12)-Holliday junction (HJ) complex. HJ DNA is sandwiched between 2 RuvA tetramers; dsDNA enters through RuvA and exits via RuvB. An RuvB hexamer assembles on each DNA strand where it exits the tetramer. Each RuvB hexamer is contacted by two RuvA subunits (via domain III) on 2 adjacent RuvB subunits; this complex drives branch migration. In the full resolvosome a probable DNA-RuvA(4)-RuvB(12)-RuvC(2) complex forms which resolves the HJ.

It localises to the cytoplasm. It carries out the reaction ATP + H2O = ADP + phosphate + H(+). Functionally, the RuvA-RuvB-RuvC complex processes Holliday junction (HJ) DNA during genetic recombination and DNA repair, while the RuvA-RuvB complex plays an important role in the rescue of blocked DNA replication forks via replication fork reversal (RFR). RuvA specifically binds to HJ cruciform DNA, conferring on it an open structure. The RuvB hexamer acts as an ATP-dependent pump, pulling dsDNA into and through the RuvAB complex. RuvB forms 2 homohexamers on either side of HJ DNA bound by 1 or 2 RuvA tetramers; 4 subunits per hexamer contact DNA at a time. Coordinated motions by a converter formed by DNA-disengaged RuvB subunits stimulates ATP hydrolysis and nucleotide exchange. Immobilization of the converter enables RuvB to convert the ATP-contained energy into a lever motion, pulling 2 nucleotides of DNA out of the RuvA tetramer per ATP hydrolyzed, thus driving DNA branch migration. The RuvB motors rotate together with the DNA substrate, which together with the progressing nucleotide cycle form the mechanistic basis for DNA recombination by continuous HJ branch migration. Branch migration allows RuvC to scan DNA until it finds its consensus sequence, where it cleaves and resolves cruciform DNA. In Bacteroides fragilis (strain ATCC 25285 / DSM 2151 / CCUG 4856 / JCM 11019 / LMG 10263 / NCTC 9343 / Onslow / VPI 2553 / EN-2), this protein is Holliday junction branch migration complex subunit RuvB.